A 380-amino-acid polypeptide reads, in one-letter code: Cytochrome b (380 aa).

4 consecutive transmembrane segments (helical) span residues 34 to 54 (FGSLLALCLATQILTGLLLAM), 78 to 99 (WLIRNMHANGASFFFICVYLHI), 114 to 134 (WNTGVLLLLTLMATAFVGYVL), and 179 to 199 (FFALHFLLPFLIAGLTLIHLT). Positions 84 and 98 each coordinate heme b. 2 residues coordinate heme b: histidine 183 and histidine 197. Histidine 202 contributes to the a ubiquinone binding site. A run of 4 helical transmembrane segments spans residues 227 to 247 (LKDILGLMLLLLPLTTLALFS), 289 to 309 (LGGVLALAASVLVLFLSPLLH), 321 to 341 (LSQLLFWTLVANLLILTWIGS), and 348 to 368 (FIIIGQLASTTYFTILLVLFP).

This sequence belongs to the cytochrome b family. As to quaternary structure, the cytochrome bc1 complex contains 11 subunits: 3 respiratory subunits (MT-CYB, CYC1 and UQCRFS1), 2 core proteins (UQCRC1 and UQCRC2) and 6 low-molecular weight proteins (UQCRH/QCR6, UQCRB/QCR7, UQCRQ/QCR8, UQCR10/QCR9, UQCR11/QCR10 and a cleavage product of UQCRFS1). This cytochrome bc1 complex then forms a dimer. Requires heme b as cofactor.

It is found in the mitochondrion inner membrane. Its function is as follows. Component of the ubiquinol-cytochrome c reductase complex (complex III or cytochrome b-c1 complex) that is part of the mitochondrial respiratory chain. The b-c1 complex mediates electron transfer from ubiquinol to cytochrome c. Contributes to the generation of a proton gradient across the mitochondrial membrane that is then used for ATP synthesis. The polypeptide is Cytochrome b (MT-CYB) (Oceanodroma melania (Black storm-petrel)).